A 663-amino-acid chain; its full sequence is Rap1 GTPase-activating protein 1 (663 aa).

Residues 1 to 17 (MIEKMQGSRMDEQRCSF) enclose the GoLoco domain. The segment at 1 to 23 (MIEKMQGSRMDEQRCSFPPPLKT) is disordered. Residue Phe-17 is modified to Phosphoserine. The Rap-GAP domain maps to 181 to 397 (IVTFDEHVIS…RTRAALLETL (217 aa)). A Phosphoserine modification is found at Ser-441. Disordered regions lie at residues 442–604 (MDAM…PHKR) and 616–645 (SVSTTSGGSSPGPSRSPHPDAGKLGDPACP). Polar residues predominate over residues 450–465 (KKPNTVSTSHSGSFAP). Phosphoserine occurs at positions 484, 499, 515, 541, and 542. Residues 535–549 (ENSSTQSSPEMPTTK) show a composition bias toward polar residues. A compositionally biased stretch (low complexity) spans 567–579 (RSSSSASSFASVV). Residues 580-591 (EETEGVDGEDTG) are compositionally biased toward acidic residues. The segment covering 616–630 (SVSTTSGGSSPGPSR) has biased composition (low complexity).

In terms of assembly, homodimer and heterodimer with RAP1B. In terms of tissue distribution, significant expression seen in the brain, kidney and pancreas. Abundant in the cerebral cortex and expressed at much lower levels in the spinal cord. Not detected in the lymphoid tissues.

The protein resides in the golgi apparatus membrane. Its function is as follows. GTPase activator for the nuclear Ras-related regulatory protein RAP-1A (KREV-1), converting it to the putatively inactive GDP-bound state. The protein is Rap1 GTPase-activating protein 1 (RAP1GAP) of Homo sapiens (Human).